The chain runs to 219 residues: Lipoprotein-releasing system ATP-binding protein LolD (219 aa).

Residues 5 to 219 form the ABC transporter domain; that stretch reads LKAGDIFKTY…KVVMQDGVII (215 aa). Residue 37–44 coordinates ATP; it reads GASGAGKS.

It belongs to the ABC transporter superfamily. Lipoprotein translocase (TC 3.A.1.125) family. In terms of assembly, the complex is composed of two ATP-binding proteins (LolD) and two transmembrane proteins (LolC and LolE).

The protein localises to the cell inner membrane. Part of the ABC transporter complex LolCDE involved in the translocation of mature outer membrane-directed lipoproteins, from the inner membrane to the periplasmic chaperone, LolA. Responsible for the formation of the LolA-lipoprotein complex in an ATP-dependent manner. This Cytophaga hutchinsonii (strain ATCC 33406 / DSM 1761 / CIP 103989 / NBRC 15051 / NCIMB 9469 / D465) protein is Lipoprotein-releasing system ATP-binding protein LolD.